The chain runs to 147 residues: MLMPKRVKYRKQQRGRMKGKATRGNFVAYGDFGIMALEPGWITSNQIEAARVAIARHIKRGGKVWIKIFPDKPVTRKPAETRMGSGKGSPEYWVAVVKPGRVMFEVGGVDKEVAKEALRLAIHKLPIKCKIVSRQDVEMGGEVNEGV.

It belongs to the universal ribosomal protein uL16 family. Part of the 50S ribosomal subunit.

Its function is as follows. Binds 23S rRNA and is also seen to make contacts with the A and possibly P site tRNAs. This is Large ribosomal subunit protein uL16 from Caldicellulosiruptor saccharolyticus (strain ATCC 43494 / DSM 8903 / Tp8T 6331).